A 205-amino-acid polypeptide reads, in one-letter code: Heat shock protein beta-11 (205 aa).

The sHSP domain occupies 67–180; it reads VSPMTTFKPI…NERVIPITYT (114 aa). Residues 184–205 are disordered; sequence KNPALQNSEPENQAVEAEAAEN. Low complexity predominate over residues 192 to 205; sequence EPENQAVEAEAAEN.

Belongs to the small heat shock protein (HSP20) family. In terms of tissue distribution, expressed specifically in the rostral-most somites at 24 hpf. At 48 hpf, expression continues in the rostral-most somites and also in the notochord. Somite expression was restricted to the vicinity of the horizontal myoseptum. In adults, expressed in the heart.

This is Heat shock protein beta-11 (hspb11) from Danio rerio (Zebrafish).